The chain runs to 118 residues: Large ribosomal subunit protein bL19 (118 aa).

It belongs to the bacterial ribosomal protein bL19 family.

Its function is as follows. This protein is located at the 30S-50S ribosomal subunit interface and may play a role in the structure and function of the aminoacyl-tRNA binding site. The chain is Large ribosomal subunit protein bL19 from Campylobacter hominis (strain ATCC BAA-381 / DSM 21671 / CCUG 45161 / LMG 19568 / NCTC 13146 / CH001A).